Consider the following 674-residue polypeptide: DNA ligase (674 aa).

NAD(+)-binding positions include 34–38 (DFEFD), 83–84 (SL), and glutamate 117. Residue lysine 119 is the N6-AMP-lysine intermediate of the active site. NAD(+) contacts are provided by arginine 140, glutamate 184, lysine 297, and lysine 321. 4 residues coordinate Zn(2+): cysteine 415, cysteine 418, cysteine 433, and cysteine 439. One can recognise a BRCT domain in the interval 598-674 (LVNTNFEGQS…IDEDEFERML (77 aa)).

This sequence belongs to the NAD-dependent DNA ligase family. LigA subfamily. Mg(2+) is required as a cofactor. Requires Mn(2+) as cofactor.

The catalysed reaction is NAD(+) + (deoxyribonucleotide)n-3'-hydroxyl + 5'-phospho-(deoxyribonucleotide)m = (deoxyribonucleotide)n+m + AMP + beta-nicotinamide D-nucleotide.. DNA ligase that catalyzes the formation of phosphodiester linkages between 5'-phosphoryl and 3'-hydroxyl groups in double-stranded DNA using NAD as a coenzyme and as the energy source for the reaction. It is essential for DNA replication and repair of damaged DNA. This is DNA ligase from Chlorobaculum parvum (strain DSM 263 / NCIMB 8327) (Chlorobium vibrioforme subsp. thiosulfatophilum).